A 317-amino-acid chain; its full sequence is Transaldolase (317 aa).

Lys132 acts as the Schiff-base intermediate with substrate in catalysis.

It belongs to the transaldolase family. Type 1 subfamily. In terms of assembly, homodimer.

It localises to the cytoplasm. The catalysed reaction is D-sedoheptulose 7-phosphate + D-glyceraldehyde 3-phosphate = D-erythrose 4-phosphate + beta-D-fructose 6-phosphate. It participates in carbohydrate degradation; pentose phosphate pathway; D-glyceraldehyde 3-phosphate and beta-D-fructose 6-phosphate from D-ribose 5-phosphate and D-xylulose 5-phosphate (non-oxidative stage): step 2/3. In terms of biological role, transaldolase is important for the balance of metabolites in the pentose-phosphate pathway. This is Transaldolase from Haemophilus influenzae (strain 86-028NP).